A 246-amino-acid chain; its full sequence is MTVDIKTTLVTIPNQNLQIAGYLAEPVAVGQYPVVIVIQEIFGVNSHIRDVTERVAKEGYVAIAPAIYQRQAPGFEEGYTPEGIEAGRKLKDQTSSAEILSDLEATIAYAQTLPNVKPEEVGLIGFCFGGWIVYLGASLPTVKATASFYGAGIPHWAPGTAEPPITYTDKIQGTLYAFFGLEDTSIPMADTEQIEQALTKYQVNHKIFRYPGADHGFFCDQRASYNAEAAADAWQKVKQLFQTELK.

Catalysis depends on residues Cys-127, Asp-183, and His-215.

It belongs to the dienelactone hydrolase family.

The enzyme catalyses 2-(5-oxo-2,5-dihydrofuran-2-ylidene)acetate + H2O = 4-oxohex-2-enedioate + H(+). The protein is Putative carboxymethylenebutenolidase of Synechocystis sp. (strain ATCC 27184 / PCC 6803 / Kazusa).